The primary structure comprises 347 residues: NADH-ubiquinone oxidoreductase chain 2 (347 aa).

The next 11 membrane-spanning stretches (helical) occupy residues 3–23, 25–45, 59–79, 96–116, 122–142, 153–173, 178–198, 200–220, 237–257, 274–294, and 325–345; these read PPIL…VLTS, HWML…PILM, YFLM…INLL, TLMT…FWVP, ISLS…LSVL, LLLL…LNQT, ILAY…IYNP, MMLL…MLFM, MPLI…LPPL, EMII…YFYM, and FLPP…IISI.

This sequence belongs to the complex I subunit 2 family. As to quaternary structure, core subunit of respiratory chain NADH dehydrogenase (Complex I) which is composed of 45 different subunits. Interacts with TMEM242.

It is found in the mitochondrion inner membrane. The catalysed reaction is a ubiquinone + NADH + 5 H(+)(in) = a ubiquinol + NAD(+) + 4 H(+)(out). Functionally, core subunit of the mitochondrial membrane respiratory chain NADH dehydrogenase (Complex I) which catalyzes electron transfer from NADH through the respiratory chain, using ubiquinone as an electron acceptor. Essential for the catalytic activity and assembly of complex I. The chain is NADH-ubiquinone oxidoreductase chain 2 from Paradoxurus hermaphroditus (Asian palm civet).